Reading from the N-terminus, the 440-residue chain is Golgi-associated RAB2 interactor protein 2 (440 aa).

It belongs to the GARIN family. In terms of assembly, interacts with CALM1. As to expression, expressed in testis (at protein level).

The protein resides in the cell projection. It is found in the cilium. Its subcellular location is the flagellum. Its function is as follows. Seems to play a role in sperm motility. In Mus musculus (Mouse), this protein is Golgi-associated RAB2 interactor protein 2.